The chain runs to 415 residues: S-inosyl-L-homocysteine hydrolase (415 aa).

2 residues coordinate substrate: Asp123 and Glu148. Position 149–151 (149–151) interacts with NAD(+); the sequence is TTT. Substrate-binding residues include Lys178 and Asp182. Residues Asn183, 212–217, Glu235, 291–293, and Asn337 each bind NAD(+); these read GYGWCG and AGH.

The protein belongs to the adenosylhomocysteinase family. It depends on NAD(+) as a cofactor.

The protein resides in the cytoplasm. The enzyme catalyses S-inosyl-L-homocysteine + H2O = L-homocysteine + inosine. It participates in amino-acid biosynthesis; S-adenosyl-L-methionine biosynthesis. Its function is as follows. Catalyzes the hydrolysis of S-inosyl-L-homocysteine (SIH) to L-homocysteine (Hcy) and inosine. Likely functions in a S-adenosyl-L-methionine (SAM) recycling pathway from S-adenosyl-L-homocysteine (SAH) produced from SAM-dependent methylation reactions. Can also catalyze the reverse reaction in vitro, i.e. the synthesis of SIH from Hcy and inosine. The protein is S-inosyl-L-homocysteine hydrolase of Methanococcus maripaludis (strain DSM 14266 / JCM 13030 / NBRC 101832 / S2 / LL).